The chain runs to 615 residues: Vitamin B12 transporter BtuB (615 aa).

Positions M1–A20 are cleaved as a signal peptide. The TonB box motif lies at N26–N33. Residues P38–T152 form the TBDR plug domain. Residues S85, N92, and I110–S111 each bind cyanocob(III)alamin. Positions K155–F615 constitute a TBDR beta-barrel domain. Beta stranded transmembrane passes span T158–G165, Y169–Q178, and T184–T195. Ca(2+) contacts are provided by D199, Q210, D212, and D214. 2 consecutive transmembrane segments (beta stranded) span residues F216–E226 and D231–D247. Positions 248, 249, and 255 each coordinate Ca(2+). The next 14 beta stranded transmembrane spans lie at R257–Q271, G273–D290, T303–Q319, A322–W331, E347–A363, I365–D375, F379–I394, Y397–N411, E429–E438, V444–N453, V468–F486, P490–A505, R513–W525, and D531–D546. Residue T303 participates in cyanocob(III)alamin binding. R513 is a cyanocob(III)alamin binding site. Cyanocob(III)alamin is bound at residue Y547. A run of 3 beta stranded transmembrane segments spans residues T559–S573, I586–A597, and A603–F615. A TonB C-terminal box motif is present at residues Y598–F615.

This sequence belongs to the TonB-dependent receptor family. BtuB (TC 1.B.14.3.1) subfamily.

Its subcellular location is the cell outer membrane. In terms of biological role, involved in the active translocation of vitamin B12 (cyanocobalamin) across the outer membrane to the periplasmic space. It derives its energy for transport by interacting with the trans-periplasmic membrane protein TonB. This is Vitamin B12 transporter BtuB from Pectobacterium atrosepticum (strain SCRI 1043 / ATCC BAA-672) (Erwinia carotovora subsp. atroseptica).